The primary structure comprises 373 residues: GTP cyclohydrolase 1 type 2 homolog (373 aa).

A divalent metal cation-binding residues include His-67, His-68, Asp-106, His-333, and Glu-336.

It belongs to the GTP cyclohydrolase I type 2/NIF3 family. In terms of assembly, homohexamer.

The polypeptide is GTP cyclohydrolase 1 type 2 homolog (Listeria monocytogenes serovar 1/2a (strain ATCC BAA-679 / EGD-e)).